Reading from the N-terminus, the 129-residue chain is Small ribosomal subunit protein uS11 (129 aa).

The protein belongs to the universal ribosomal protein uS11 family. As to quaternary structure, part of the 30S ribosomal subunit.

In terms of biological role, located on the platform of the 30S subunit. The protein is Small ribosomal subunit protein uS11 of Methanocaldococcus jannaschii (strain ATCC 43067 / DSM 2661 / JAL-1 / JCM 10045 / NBRC 100440) (Methanococcus jannaschii).